A 201-amino-acid polypeptide reads, in one-letter code: Recombination protein RecR (201 aa).

The C4-type zinc-finger motif lies at 57–72 (CSDCRTFTEQDVCAIC). The Toprim domain maps to 81-176 (GLVCVVESPA…MASRIAHGVP (96 aa)).

The protein belongs to the RecR family.

May play a role in DNA repair. It seems to be involved in an RecBC-independent recombinational process of DNA repair. It may act with RecF and RecO. The polypeptide is Recombination protein RecR (Pectobacterium atrosepticum (strain SCRI 1043 / ATCC BAA-672) (Erwinia carotovora subsp. atroseptica)).